Consider the following 229-residue polypeptide: Ras-related protein RabZ (229 aa).

The segment at 1–39 (MGCFHSREPTATGKTKKEEPTSAVKTNKEEKSSNYVSEP) is disordered. A lipid anchor (N-myristoyl glycine) is attached at Gly-2. Cys-3 is lipidated: S-palmitoyl cysteine. Residues 15-32 (TKKEEPTSAVKTNKEEKS) are compositionally biased toward basic and acidic residues. 57-64 (GDQATGKS) contacts GTP. The short motif at 79 to 88 (HKPSPIIIDC) is the Effector region element. GTP-binding positions include 106–110 (DTAGQ) and 164–167 (NKCD).

Belongs to the small GTPase superfamily. Rab family. In terms of processing, although this sequence lacks the C-terminal cysteine motifs subject to isoprenylation in other Rab proteins, it does have N-terminal myristoylation and S-palmitoylation sequence motifs.

This is Ras-related protein RabZ (rabZ) from Dictyostelium discoideum (Social amoeba).